Here is a 261-residue protein sequence, read N- to C-terminus: Enolase-phosphatase E1 (261 aa).

2 residues coordinate Mg(2+): Asp-16 and Glu-18. Residues 153 to 154 and Lys-187 contribute to the substrate site; that span reads SS. Asp-212 provides a ligand contact to Mg(2+).

Belongs to the HAD-like hydrolase superfamily. MasA/MtnC family. Monomer. Mg(2+) serves as cofactor.

The protein localises to the cytoplasm. It is found in the nucleus. The enzyme catalyses 5-methylsulfanyl-2,3-dioxopentyl phosphate + H2O = 1,2-dihydroxy-5-(methylsulfanyl)pent-1-en-3-one + phosphate. Its pathway is amino-acid biosynthesis; L-methionine biosynthesis via salvage pathway; L-methionine from S-methyl-5-thio-alpha-D-ribose 1-phosphate: step 3/6. It participates in amino-acid biosynthesis; L-methionine biosynthesis via salvage pathway; L-methionine from S-methyl-5-thio-alpha-D-ribose 1-phosphate: step 4/6. Its function is as follows. Bifunctional enzyme that catalyzes the enolization of 2,3-diketo-5-methylthiopentyl-1-phosphate (DK-MTP-1-P) into the intermediate 2-hydroxy-3-keto-5-methylthiopentenyl-1-phosphate (HK-MTPenyl-1-P), which is then dephosphorylated to form the acireductone 1,2-dihydroxy-3-keto-5-methylthiopentene (DHK-MTPene). This chain is Enolase-phosphatase E1, found in Homo sapiens (Human).